The primary structure comprises 458 residues: Zinc finger protein 239 (458 aa).

Residue Lys-108 forms a Glycyl lysine isopeptide (Lys-Gly) (interchain with G-Cter in SUMO2) linkage. Ser-191 carries the post-translational modification Phosphoserine. C2H2-type zinc fingers lie at residues 207-229 (YECS…QRDH), 235-257 (YKCE…QAVH), 263-285 (YKCD…HAVH), 291-313 (YKCD…QRVH), 319-341 (YECE…QRVH), 347-369 (YKCG…RCIH), 375-397 (YQCY…LRVH), 403-425 (YHCG…QRVH), and 431-453 (YECS…QRVH).

It belongs to the krueppel C2H2-type zinc-finger protein family.

It is found in the nucleus. Its function is as follows. May be involved in transcriptional regulation. In Homo sapiens (Human), this protein is Zinc finger protein 239 (ZNF239).